The chain runs to 482 residues: Proline--tRNA ligase (482 aa).

Belongs to the class-II aminoacyl-tRNA synthetase family. ProS type 3 subfamily. As to quaternary structure, homodimer.

The protein resides in the cytoplasm. The enzyme catalyses tRNA(Pro) + L-proline + ATP = L-prolyl-tRNA(Pro) + AMP + diphosphate. In terms of biological role, catalyzes the attachment of proline to tRNA(Pro) in a two-step reaction: proline is first activated by ATP to form Pro-AMP and then transferred to the acceptor end of tRNA(Pro). The polypeptide is Proline--tRNA ligase (Natronomonas pharaonis (strain ATCC 35678 / DSM 2160 / CIP 103997 / JCM 8858 / NBRC 14720 / NCIMB 2260 / Gabara) (Halobacterium pharaonis)).